We begin with the raw amino-acid sequence, 386 residues long: DNA-directed RNA polymerase subunit Rpo1C (386 aa).

It belongs to the RNA polymerase beta' chain family. In terms of assembly, part of the RNA polymerase complex.

The protein resides in the cytoplasm. It catalyses the reaction RNA(n) + a ribonucleoside 5'-triphosphate = RNA(n+1) + diphosphate. Functionally, DNA-dependent RNA polymerase (RNAP) catalyzes the transcription of DNA into RNA using the four ribonucleoside triphosphates as substrates. Forms part of the jaw domain. The protein is DNA-directed RNA polymerase subunit Rpo1C of Methanococcus maripaludis (strain C5 / ATCC BAA-1333).